We begin with the raw amino-acid sequence, 613 residues long: MESCDCFETHVNQDDLLVKYQYISDALIALAYFSIPLELIYFVQKSAFFPYKWVLMQFGAFIILCGATHFINLWMFFMHSKAVAIVMTIAKVSCAVVSCATALMLVHIIPDLLSVKNRELFLKKKADELDREMGLILTQEETGRHVRMLTHGIRRTLDRHTILRTTLVELGKTLCLEECALWMPSQSGLYLQLSHTLSHKIQVGSSVPINLPIINELFNSAQAMHIPHSCPLAKIGPPVGRYSPPEVVSVRVPLLHLSNFQGSDWSDLSGKGYAIMVLILPTDGARKWRDHELELVENVADQVAVALSHAAILEESMHARDQLMEQNFALDKARQEAEMAVHARNDFLAVMNHEMRTPMHAIISLSSLLLETELSPEQRVMIETILKSSNLVATLISDVLDLSRLEDGSLLLENEPFSLQAIFEEVISLIKPIASVKKLSTNLILSADLPTYAIGDEKRLMQTILNIMGNAVKFTKEGYISIIASIMKPESLQELPSPEFFPVLSDSHFYLCVQVKDTGCGIHTQDIPLLFTKFVQPRTGTQRNHSGGGLGLALCKRFVGLMGGYMWIESEGLEKGCTASFIIRLGICNGPSSSSGSMALHLAAKSQTRPWNW.

Transmembrane regions (helical) follow at residues 23-43 (ISDA…IYFV), 58-78 (FGAF…MFFM), and 95-115 (AVVS…LLSV). Cu cation contacts are provided by C65 and H69. The 150-residue stretch at 158–307 (DRHTILRTTL…NVADQVAVAL (150 aa)) folds into the GAF domain. Residues 350–589 (VMNHEMRTPM…SFIIRLGICN (240 aa)) form the Histidine kinase domain. Position 353 is a phosphohistidine; by autocatalysis (H353).

It belongs to the ethylene receptor family. In terms of assembly, homodimer; disulfide-linked. Heteromer with ETR1. The cofactor is Cu cation. In terms of processing, autophosphorylated on both His and Ser residues in the presence of manganese. Loss of His autophosphorylation in the presence of both manganese and magnesium. Expressed in etiolated seedlings, leaves, stems, roots, flowers, embryos, anthers, carpels and ovules.

The protein localises to the endoplasmic reticulum membrane. It catalyses the reaction ATP + protein L-histidine = ADP + protein N-phospho-L-histidine.. Ethylene receptor related to bacterial two-component regulators. Acts as a redundant negative regulator of ethylene signaling. The polypeptide is Ethylene response sensor 1 (ERS1) (Arabidopsis thaliana (Mouse-ear cress)).